A 1159-amino-acid chain; its full sequence is MAHRGPSRASKGPGPTARAPSPGAPPPPRSPRSRPLLLLLLLLGACGAAGRSPEPGRLGPHAQLTRVPRSPPAGRAEPGGGEDRQARGTEPGAPGPSPGPAPGPGEDGAPAAGYRRWERAAPLAGVASRAQVSLISTSFVLKGDATHNQAMVHWTGENSSVILILTKYYHADMGKVLESSLWRSSDFGTSYTKLTLQPGVTTVIDNFYICPTNKRKVILVSSSLSDRDQSLFLSADEGATFQKQPIPFFVETLIFHPKEEDKVLAYTKESKLYVSSDLGKKWTLLQERVTKDHVFWSVSGVDADPDLVHVEAQDLGGDFRYVTCAIHNCSEKMLTAPFAGPIDHGSLTVQDDYIFFKATSANQTKYYVSYRRNEFVLMKLPKYALPKDLQIISTDESQVFVAVQEWYQMDTYNLYQSDPRGVRYALVLQDVRSSRQAEESVLIDILEVRGVKGVFLANQKIDGKVMTLITYNKGRDWDYLRPPSMDMNGKPTNCKPPDCHLHLHLRWADNPYVSGTVHTKDTAPGLIMGAGNLGSQLVEYKEEMYITSDCGHTWRQVFEEEHHILYLDHGGVIVAIKDTSIPLKILKFSVDEGLTWSTHNFTSTSVFVDGLLSEPGDETLVMTVFGHISFRSDWELVKVDFRPSFSRQCGEEDYSSWELSNLQGDRCIMGQQRSFRKRKSTSWCIKGRSFTSALTSRVCECRDSDFLCDYGFERSSSSESSTNKCSANFWFNPLSPPDDCALGQTYTSSLGYRKVVSNVCEGGVDMQQSQVQLQCPLTPPRGLQVSIQGEAVAVRPGEDVLFVVRQEQGDVLTTKYQVDLGDGFKAMYVNLTLTGEPIRHRYESPGIYRVSVRAENTAGHDEAVLFVQVNSPLQALYLEVVPVIGLNQEVNLTAVLLPLNPNLTVFYWWIGHSLQPLLSLDNSVTTRFSDTGDVRVTVQAACGNSVLQDSRVLRVLDQFQVMPLQFSKELDAYNPNTPEWREDVGLVVTRLLSKETSVPQELLVTVVKPGLPTLADLYVLLPPPRPTRKRSLSSDKRLAAIQQVLNAQKISFLLRGGVRVLVALRDTGTGAEQLGGGGGYWAVVVLFVIGLFAAGAFILYKFKRKRPGRTVYAQMHNEKEQEMTSPVSHSEDVQGAVQGNHSGVVLSINSREMHSYLVS.

Disordered regions lie at residues 1–36 (MAHRGPSRASKGPGPTARAPSPGAPPPPRSPRSRPL) and 48–111 (AAGR…GAPA). Positions 1-50 (MAHRGPSRASKGPGPTARAPSPGAPPPPRSPRSRPLLLLLLLLGACGAAG) are cleaved as a signal peptide. The span at 12 to 21 (GPGPTARAPS) shows a compositional bias: low complexity. The Extracellular segment spans residues 51-1078 (RSPEPGRLGP…TGAEQLGGGG (1028 aa)). Residues 93-103 (APGPSPGPAPG) show a composition bias toward pro residues. N158 carries N-linked (GlcNAc...) asparagine glycosylation. BNR repeat units follow at residues 182–193 (WRSSDFGTSYTK), 232–243 (FLSADEGATFQK), and 273–284 (YVSSDLGKKWTL). The cysteines at positions 324 and 329 are disulfide-linked. Residues N328 and N362 are each glycosylated (N-linked (GlcNAc...) asparagine). The BNR 4 repeat unit spans residues 468–479 (LITYNKGRDWDY). C494 and C499 form a disulfide bridge. BNR repeat units lie at residues 545–556 (YITSDCGHTWRQ) and 587–598 (KFSVDEGLTWST). N600 carries N-linked (GlcNAc...) asparagine glycosylation. Intrachain disulfides connect C649–C684, C667–C699, C701–C760, C708–C725, and C740–C775. Residues 786 to 876 (SIQGEAVAVR…VQVNSPLQAL (91 aa)) enclose the PKD domain. Residues N830, N891, and N902 are each glycosylated (N-linked (GlcNAc...) asparagine). A helical membrane pass occupies residues 1079-1099 (GYWAVVVLFVIGLFAAGAFIL). At 1100 to 1159 (YKFKRKRPGRTVYAQMHNEKEQEMTSPVSHSEDVQGAVQGNHSGVVLSINSREMHSYLVS) the chain is on the cytoplasmic side.

This sequence belongs to the VPS10-related sortilin family. SORCS subfamily. In terms of assembly, homodimer (in vitro). Heterodimer with NGFR. The extracellular domains of the heterodimer bind the precursor form of NGF (proNGF). Has much higher affinity for proNGF than for mature NGF. Can also bind mature NGF and BDNF. Each chain in the receptor dimer interacts (via extracellular domain) with an NGF dimer (in vitro). Interacts with the precursor forms of BDNF (proBDNF) and NTF3 (proNT3). The cytoplasmic region of the heterodimer formed by NGFR and SORCS2 binds TRIO. ProNGF binding mediates dissociation of TRIO from the receptor complex. Interacts with SLC1A1. Interacts with VPS35. Interacts (via extracellular domain) with NTRK2 (via extracellular domain). Interacts with VPS35. Interacts (via extracellular domain) with GRIN2A. Post-translationally, proteolytic cleavage removes a propeptide, giving rise to a 122 kDa chain that includes a cytoplasmic tail. Further cleavage gives rise to a 104 kDa chain that lacks the cytoplasmic tail, and a membrane-bound 18 kDa chain. The 104 kDa chain remains bound to the 18 kDa chain. In terms of processing, N-glycosylated. As to expression, detected on neurons in the caudate region. Detected on neurons in the hippocampus (at protein level). Highly expressed in brain and kidney. Detected at low levels in heart, liver, small intestine, skeletal muscle and thymus.

It localises to the cell membrane. Its subcellular location is the cell projection. It is found in the cytoplasmic vesicle membrane. The protein resides in the early endosome membrane. The protein localises to the recycling endosome membrane. It localises to the synapse. Its subcellular location is the synaptosome. It is found in the perikaryon. The protein resides in the dendrite. The protein localises to the dendritic spine. It localises to the postsynaptic density membrane. Its function is as follows. The heterodimer formed by NGFR and SORCS2 functions as receptor for the precursor forms of NGF (proNGF) and BDNF (proBDNF). ProNGF and proBDNF binding both promote axon growth cone collapse (in vitro). Plays a role in the regulation of dendritic spine density in hippocampus neurons. Required for normal neurite branching and extension in response to BDNF. Plays a role in BDNF-dependent hippocampal synaptic plasticity. Together with NGFR and NTRK2, is required both for BDNF-mediated synaptic long-term depression and long-term potentiation. ProNGF binding promotes dissociation of TRIO from the heterodimer, which leads to inactivation of RAC1 and/or RAC2 and subsequent reorganization of the actin cytoskeleton. Together with the retromer complex subunit VPS35, required for normal expression of GRIN2A at synapses and dendritic cell membranes. Required for normal expression of the amino acid transporter SLC1A1 at the cell membrane, and thereby contributes to protect cells against oxidative stress. Functionally, does not promote Schwann cell apoptosis in response to proBDNF. SorCS2 104 kDa chain and SorCS2 18 kDa chain together promote Schwann cell apoptosis in response to proBDNF. This Homo sapiens (Human) protein is VPS10 domain-containing receptor SorCS2 (SORCS2).